The primary structure comprises 450 residues: Glucose-6-phosphate isomerase (450 aa).

Thr-39 bears the Phosphothreonine mark. Glu-291 acts as the Proton donor in catalysis. Catalysis depends on residues His-312 and Lys-426.

This sequence belongs to the GPI family.

It is found in the cytoplasm. It carries out the reaction alpha-D-glucose 6-phosphate = beta-D-fructose 6-phosphate. The protein operates within carbohydrate biosynthesis; gluconeogenesis. It functions in the pathway carbohydrate degradation; glycolysis; D-glyceraldehyde 3-phosphate and glycerone phosphate from D-glucose: step 2/4. Functionally, catalyzes the reversible isomerization of glucose-6-phosphate to fructose-6-phosphate. The polypeptide is Glucose-6-phosphate isomerase (Bacillus cereus (strain G9842)).